The chain runs to 309 residues: Homoserine O-succinyltransferase (309 aa).

Cys142 (acyl-thioester intermediate) is an active-site residue. Lys163 and Ser192 together coordinate substrate. Catalysis depends on His235, which acts as the Proton acceptor. Residue Glu237 is part of the active site. Arg249 contributes to the substrate binding site.

This sequence belongs to the MetA family. Homodimer.

It is found in the cytoplasm. It catalyses the reaction L-homoserine + succinyl-CoA = O-succinyl-L-homoserine + CoA. The protein operates within amino-acid biosynthesis; L-methionine biosynthesis via de novo pathway; O-succinyl-L-homoserine from L-homoserine: step 1/1. Its function is as follows. Transfers a succinyl group from succinyl-CoA to L-homoserine, forming succinyl-L-homoserine. The chain is Homoserine O-succinyltransferase from Shigella sonnei (strain Ss046).